Consider the following 176-residue polypeptide: Ribosome rescue factor SmrB (176 aa).

The Smr domain occupies 97–172 (LDMHGMTQQE…GDGALLVLLS (76 aa)).

This sequence belongs to the SmrB family. As to quaternary structure, associates with collided ribosomes, but not with correctly translating polysomes.

Its function is as follows. Acts as a ribosome collision sensor. Detects stalled/collided disomes (pairs of ribosomes where the leading ribosome is stalled and a second ribosome has collided with it) and endonucleolytically cleaves mRNA at the 5' boundary of the stalled ribosome. Stalled/collided disomes form a new interface (primarily via the 30S subunits) that binds SmrB. Cleaved mRNA becomes available for tmRNA ligation, leading to ribosomal subunit dissociation and rescue of stalled ribosomes. The polypeptide is Ribosome rescue factor SmrB (Vibrio campbellii (strain ATCC BAA-1116)).